We begin with the raw amino-acid sequence, 153 residues long: Ribonuclease H (153 aa).

Residues 1 to 141 enclose the RNase H type-1 domain; the sequence is MKHIEIYTDG…CDVLARDAAS (141 aa). Residues Asp-9, Glu-47, Asp-69, and Asp-133 each contribute to the Mg(2+) site.

It belongs to the RNase H family. In terms of assembly, monomer. The cofactor is Mg(2+).

It localises to the cytoplasm. It catalyses the reaction Endonucleolytic cleavage to 5'-phosphomonoester.. Endonuclease that specifically degrades the RNA of RNA-DNA hybrids. This chain is Ribonuclease H, found in Pseudoalteromonas atlantica (strain T6c / ATCC BAA-1087).